The following is a 169-amino-acid chain: Peptide deformylase (169 aa).

Fe cation-binding residues include cysteine 91 and histidine 133. The active site involves glutamate 134. Residue histidine 137 participates in Fe cation binding.

This sequence belongs to the polypeptide deformylase family. Fe(2+) serves as cofactor.

The enzyme catalyses N-terminal N-formyl-L-methionyl-[peptide] + H2O = N-terminal L-methionyl-[peptide] + formate. In terms of biological role, removes the formyl group from the N-terminal Met of newly synthesized proteins. Requires at least a dipeptide for an efficient rate of reaction. N-terminal L-methionine is a prerequisite for activity but the enzyme has broad specificity at other positions. The polypeptide is Peptide deformylase (Escherichia coli (strain SMS-3-5 / SECEC)).